The sequence spans 80 residues: RNA-binding protein Hfq (80 aa).

The Sm domain occupies 10–70 (DIFLNNARKE…ISTVSPAKPI (61 aa)).

It belongs to the Hfq family. Homohexamer.

RNA chaperone that binds small regulatory RNA (sRNAs) and mRNAs to facilitate mRNA translational regulation in response to envelope stress, environmental stress and changes in metabolite concentrations. Also binds with high specificity to tRNAs. This is RNA-binding protein Hfq from Clostridium perfringens (strain SM101 / Type A).